Consider the following 394-residue polypeptide: Lipid-A-disaccharide synthase (394 aa).

It belongs to the LpxB family.

The enzyme catalyses 2-N,3-O-bis[(3R)-3-hydroxytetradecanoyl]-alpha-D-glucosaminyl 1-phosphate + UDP-2-N,3-O-bis[(3R)-3-hydroxytetradecanoyl]-alpha-D-glucosamine = lipid A disaccharide (E. coli) + UDP + H(+). It catalyses the reaction a lipid X + a UDP-2-N,3-O-bis[(3R)-3-hydroxyacyl]-alpha-D-glucosamine = a lipid A disaccharide + UDP + H(+). Its pathway is glycolipid biosynthesis; lipid IV(A) biosynthesis; lipid IV(A) from (3R)-3-hydroxytetradecanoyl-[acyl-carrier-protein] and UDP-N-acetyl-alpha-D-glucosamine: step 5/6. In terms of biological role, condensation of UDP-2,3-diacylglucosamine and 2,3-diacylglucosamine-1-phosphate to form lipid A disaccharide, a precursor of lipid A, a phosphorylated glycolipid that anchors the lipopolysaccharide to the outer membrane of the cell. This chain is Lipid-A-disaccharide synthase, found in Yersinia pestis.